The following is a 206-amino-acid chain: MVNITSAEFVTSGTRPEHYPPGDLLEIAFVGRSNVGKSSLINVLVNRKSLVRTSSTPGRTQLINFFRVNGSLMLVDLPGYGFARVPPEVKRQWGPMVETYLAGRSCLACVVLIVDVRRTPAEEDRLMLQWLRAYDIPVLVVITKCDKVSKNERAKQASLISRTLGLAPDEMAFFSALSREGRDAIWARIEAIMAEGHSPSVDGAPE.

The EngB-type G domain occupies 23–195 (DLLEIAFVGR…WARIEAIMAE (173 aa)). Residues 31–38 (GRSNVGKS), 58–62 (GRTQL), 76–79 (DLPG), 143–146 (TKCD), and 174–176 (FSA) each bind GTP. Mg(2+) contacts are provided by Ser38 and Thr60.

Belongs to the TRAFAC class TrmE-Era-EngA-EngB-Septin-like GTPase superfamily. EngB GTPase family. Requires Mg(2+) as cofactor.

Its function is as follows. Necessary for normal cell division and for the maintenance of normal septation. This Geobacter sulfurreducens (strain ATCC 51573 / DSM 12127 / PCA) protein is Probable GTP-binding protein EngB.